The following is a 26-amino-acid chain: Turripeptide OL49 (26 aa).

In terms of processing, contains 3 disulfide bonds. Expressed by the venom duct.

It is found in the secreted. In terms of biological role, acts as a neurotoxin by inhibiting an ion channel. This Iotyrris olangoensis (Sea snail) protein is Turripeptide OL49.